A 318-amino-acid chain; its full sequence is Transaldolase (318 aa).

K131 serves as the catalytic Schiff-base intermediate with substrate.

The protein belongs to the transaldolase family. Type 1 subfamily. In terms of assembly, homodimer.

Its subcellular location is the cytoplasm. It carries out the reaction D-sedoheptulose 7-phosphate + D-glyceraldehyde 3-phosphate = D-erythrose 4-phosphate + beta-D-fructose 6-phosphate. Its pathway is carbohydrate degradation; pentose phosphate pathway; D-glyceraldehyde 3-phosphate and beta-D-fructose 6-phosphate from D-ribose 5-phosphate and D-xylulose 5-phosphate (non-oxidative stage): step 2/3. In terms of biological role, transaldolase is important for the balance of metabolites in the pentose-phosphate pathway. The protein is Transaldolase of Buchnera aphidicola subsp. Cinara cedri (strain Cc).